The sequence spans 128 residues: Ribonuclease P protein component (128 aa).

Belongs to the RnpA family. As to quaternary structure, consists of a catalytic RNA component (M1 or rnpB) and a protein subunit.

It carries out the reaction Endonucleolytic cleavage of RNA, removing 5'-extranucleotides from tRNA precursor.. RNaseP catalyzes the removal of the 5'-leader sequence from pre-tRNA to produce the mature 5'-terminus. It can also cleave other RNA substrates such as 4.5S RNA. The protein component plays an auxiliary but essential role in vivo by binding to the 5'-leader sequence and broadening the substrate specificity of the ribozyme. This is Ribonuclease P protein component from Synechococcus sp. (strain CC9902).